Reading from the N-terminus, the 217-residue chain is Thiamine-phosphate synthase (217 aa).

Residues 41–45 (QYRDK) and Asn-76 each bind 4-amino-2-methyl-5-(diphosphooxymethyl)pyrimidine. Mg(2+) is bound by residues Asp-77 and Asp-96. Ser-115 is a binding site for 4-amino-2-methyl-5-(diphosphooxymethyl)pyrimidine. 142–144 (SPS) provides a ligand contact to 2-[(2R,5Z)-2-carboxy-4-methylthiazol-5(2H)-ylidene]ethyl phosphate. Lys-145 is a 4-amino-2-methyl-5-(diphosphooxymethyl)pyrimidine binding site. Residues Gly-172 and 192–193 (IS) each bind 2-[(2R,5Z)-2-carboxy-4-methylthiazol-5(2H)-ylidene]ethyl phosphate.

It belongs to the thiamine-phosphate synthase family. The cofactor is Mg(2+).

It catalyses the reaction 2-[(2R,5Z)-2-carboxy-4-methylthiazol-5(2H)-ylidene]ethyl phosphate + 4-amino-2-methyl-5-(diphosphooxymethyl)pyrimidine + 2 H(+) = thiamine phosphate + CO2 + diphosphate. The catalysed reaction is 2-(2-carboxy-4-methylthiazol-5-yl)ethyl phosphate + 4-amino-2-methyl-5-(diphosphooxymethyl)pyrimidine + 2 H(+) = thiamine phosphate + CO2 + diphosphate. It carries out the reaction 4-methyl-5-(2-phosphooxyethyl)-thiazole + 4-amino-2-methyl-5-(diphosphooxymethyl)pyrimidine + H(+) = thiamine phosphate + diphosphate. It participates in cofactor biosynthesis; thiamine diphosphate biosynthesis; thiamine phosphate from 4-amino-2-methyl-5-diphosphomethylpyrimidine and 4-methyl-5-(2-phosphoethyl)-thiazole: step 1/1. Functionally, condenses 4-methyl-5-(beta-hydroxyethyl)thiazole monophosphate (THZ-P) and 2-methyl-4-amino-5-hydroxymethyl pyrimidine pyrophosphate (HMP-PP) to form thiamine monophosphate (TMP). The polypeptide is Thiamine-phosphate synthase (Acidithiobacillus ferrooxidans (strain ATCC 23270 / DSM 14882 / CIP 104768 / NCIMB 8455) (Ferrobacillus ferrooxidans (strain ATCC 23270))).